The following is a 401-amino-acid chain: Phosphoglycerate kinase (401 aa).

Substrate is bound by residues 20-22 (DFN), Arg35, 58-61 (HLGR), Arg117, and Arg154. ATP-binding positions include Lys204, Gly298, Glu329, and 358–361 (GGDS).

It belongs to the phosphoglycerate kinase family. In terms of assembly, monomer.

It is found in the cytoplasm. The enzyme catalyses (2R)-3-phosphoglycerate + ATP = (2R)-3-phospho-glyceroyl phosphate + ADP. It functions in the pathway carbohydrate degradation; glycolysis; pyruvate from D-glyceraldehyde 3-phosphate: step 2/5. This chain is Phosphoglycerate kinase, found in Bifidobacterium longum (strain NCC 2705).